The primary structure comprises 70 residues: Putative defensin-like protein 280 (70 aa).

The signal sequence occupies residues 1-23 (MASIKHFFLVFICVSVLLTSGLA). 3 cysteine pairs are disulfide-bonded: C30/C53, C39/C65, and C43/C67.

This sequence belongs to the DEFL family.

It localises to the secreted. The chain is Putative defensin-like protein 280 from Arabidopsis thaliana (Mouse-ear cress).